The chain runs to 325 residues: 5-dehydro-2-deoxygluconokinase (325 aa).

It belongs to the carbohydrate kinase PfkB family.

The enzyme catalyses 5-dehydro-2-deoxy-D-gluconate + ATP = 6-phospho-5-dehydro-2-deoxy-D-gluconate + ADP + H(+). Its pathway is polyol metabolism; myo-inositol degradation into acetyl-CoA; acetyl-CoA from myo-inositol: step 5/7. In terms of biological role, catalyzes the phosphorylation of 5-dehydro-2-deoxy-D-gluconate (2-deoxy-5-keto-D-gluconate or DKG) to 6-phospho-5-dehydro-2-deoxy-D-gluconate (DKGP). In Listeria monocytogenes serotype 4b (strain CLIP80459), this protein is 5-dehydro-2-deoxygluconokinase.